Here is a 499-residue protein sequence, read N- to C-terminus: MRLGYNEKLVLLKLAELKNATVEELIEKTNLDQVAVMRALLTLQSQGLAKVHEERRRMIKLTETGKRYIEIGLPEIRALKILKEKGKVTLNDLKDVLSDEELKAIVGVLRKEGWAEVSKTKEGLTLKLSEKGKKAEKRAIDIALEVLSKGEVSVEEIEKIISVKELKRRKIAEEEEKVIRNVEITDKGLELVEKGIELKREVSILTPELIVTGKWREVEFKPFNIKAPVKKIYPGKKQPYRVFLDKIRRRLIEMGFIEMTVDSLIETQFWNFDALFQPQNHPAREWTDTYQLKYPEKGYLPDENLVSKVKEAHERGLAGSRGWGYVWSPERAMLLMPRAHATALSARELAKGIEIPGKYFTIQRVFRPDVLDRTHLIEFNQIDGFVASEDLTFRHLLGILKRFAIEIAGAKKVKFFPDYYPFTEPSVQLSAYHPELGWVEFGGAGIFREEMTEALGIKVPVIAWGIGIDRLAMFKLGVDDIRYLFSYDLKWLRESKLIW.

L-phenylalanine contacts are provided by residues Thr-342, 381–383, and Phe-422; that span reads QID. Glu-424 contacts Mg(2+). Phe-447 is a binding site for L-phenylalanine.

It belongs to the class-II aminoacyl-tRNA synthetase family. Phe-tRNA synthetase alpha subunit type 2 subfamily. Tetramer of two alpha and two beta subunits. It depends on Mg(2+) as a cofactor.

It localises to the cytoplasm. It catalyses the reaction tRNA(Phe) + L-phenylalanine + ATP = L-phenylalanyl-tRNA(Phe) + AMP + diphosphate + H(+). The sequence is that of Phenylalanine--tRNA ligase alpha subunit from Pyrococcus horikoshii (strain ATCC 700860 / DSM 12428 / JCM 9974 / NBRC 100139 / OT-3).